Reading from the N-terminus, the 246-residue chain is NAD-dependent protein deacetylase (246 aa).

Residues 1-246 enclose the Deacetylase sirtuin-type domain; that stretch reads MKMKEFLDLL…RRVMEEGGIS (246 aa). Residues alanine 22, threonine 26, phenylalanine 33, arginine 34, glutamine 98, isoleucine 100, aspartate 101, and histidine 116 each contribute to the NAD(+) site. Position 33 (phenylalanine 33) interacts with nicotinamide. Residues isoleucine 100 and aspartate 101 each coordinate nicotinamide. The active-site Proton acceptor is the histidine 116. Positions 124, 127, 148, and 151 each coordinate Zn(2+). 7 residues coordinate NAD(+): serine 189, serine 190, asparagine 214, leucine 215, glycine 216, aspartate 231, and valine 232.

The protein belongs to the sirtuin family. Class U subfamily. Zn(2+) is required as a cofactor.

The protein resides in the cytoplasm. It catalyses the reaction N(6)-acetyl-L-lysyl-[protein] + NAD(+) + H2O = 2''-O-acetyl-ADP-D-ribose + nicotinamide + L-lysyl-[protein]. Its activity is regulated as follows. Non-competitively inhibited by nicotinamide in vitro and in vivo, but not by nicotinic acid. Nicotinamide inhibits the deacetylation activity by reacting with a reaction intermediate. NAD-dependent protein deacetylase which modulates the activities of several enzymes which are inactive in their acetylated form. Also has depropionylation activity in vitro. Also able to ADP-ribosylate peptide substrates with Arg or Lys in the +2 position. The role of this function in vivo is not clear. The sequence is that of NAD-dependent protein deacetylase from Thermotoga maritima (strain ATCC 43589 / DSM 3109 / JCM 10099 / NBRC 100826 / MSB8).